The primary structure comprises 953 residues: MIEGISFASFVTHEKPKFVRALDFYKALGFLPTKEYKHGTDHHATDEEGAGSIQEVWLTSSRAGVPSVTVKLRLSRHGNEHVSLPNLKHDWRSLVPSLVYYAPDLDAVRAAITPFLHEDHSTLLERPSHTNFIELYAIDPMGNLVGFSRRENPYSSAMQKPFSADDIGPQNFSKPNETKIKGKKRIGVMTSGGDAPGMCAAVRAVVRAGIARGCEVYAVREGYEGLVKGGDLIEPLSWEDVRGWLSLGGTLIGTARCKEFREREGRLAGALNMVKNGIDALIVIGGDGSLTGADLFREEWPSLIEELVTNGSITAEQAERHRHLDICGMVGSIDNDMATTDVTIGAYSSLDRICELVDFIDATAQSHSRAFVVEVMGRHCGWLALMAGTATGADYIFIPEAAPDATQWAEKMTRVVKRHRSQGKRKTVVIVAEGAIDSDLNPITAKMVKDVLDGIGLDTRISTLGHVQRGGPPVAADRVLASLQGVEAIDAILSLTPETPSPMIALNENKITRKPLVESVALTKKVADAIGNKDFAEAMRLRNPEFVEQLQGFLLTNSADKDRPQEPAKDPLRVAIVCTGAPAGGMNAAIRSAVLYGLARGHQMFAIHNGWSGLVKNGDDAVRELTWLEVEPLCQKGGCEIGTNRSLPECDLGMIAYHFQRQRFDGLIVIGGFEAFRALNQLDDARHAYPALRIPMVGIPATISNNVPGTDYSLGADTCLNSLVQYCDVLKTSASATRLRLFVVEVQGGNSGYIATVAGLITGAYVVYTPESGINLRLLQHDISYLKDTFAHQADVNRTGKLLLRNERSSNVFTTDVITGIINEEAKGSFDARTAIPGHVQQGGHPSPTDRVRAQRFAIKAVQFIEEHHGSKNNADHCVILGVRGSKFKYTSVSHLYAHKTEHGARRPKHSYWHAIGDIANMLVGRKAPPLPETLNDEIEKNIAKEQGIIDPC.

The tract at residues 1-558 is N-terminal catalytic PFK domain 1; it reads MIEGISFASF…QLQGFLLTNS (558 aa). Residues Gly193, 256–257, and 286–289 each bind ATP; these read RC and GDGS. Asp287 lines the Mg(2+) pocket. Substrate contacts are provided by residues 332–334, Arg369, 376–378, Glu433, Arg460, and 466–469; these read SID, MGR, and HVQR. Asp334 acts as the Proton acceptor in catalysis. The segment at 559–572 is interdomain linker; it reads ADKDRPQEPAKDPL. The C-terminal regulatory PFK domain 2 stretch occupies residues 573-953; sequence RVAIVCTGAP…AKEQGIIDPC (381 aa). Beta-D-fructose 2,6-bisphosphate is bound by residues Arg645, 702–706, Arg740, 747–749, Glu807, Arg833, 839–842, and Arg906; these read TISNN, QGG, and HVQQ.

Belongs to the phosphofructokinase type A (PFKA) family. ATP-dependent PFK group I subfamily. Eukaryotic two domain clade 'E' sub-subfamily. As to quaternary structure, heterooctamer of 4 alpha and 4 beta chains. It depends on Mg(2+) as a cofactor.

It is found in the cytoplasm. The enzyme catalyses beta-D-fructose 6-phosphate + ATP = beta-D-fructose 1,6-bisphosphate + ADP + H(+). The protein operates within carbohydrate degradation; glycolysis; D-glyceraldehyde 3-phosphate and glycerone phosphate from D-glucose: step 3/4. Allosterically activated by ADP, AMP, or fructose 2,6-bisphosphate, and allosterically inhibited by ATP or citrate. Catalyzes the phosphorylation of D-fructose 6-phosphate to fructose 1,6-bisphosphate by ATP, the first committing step of glycolysis. The polypeptide is ATP-dependent 6-phosphofructokinase (PFK1) (Yarrowia lipolytica (strain CLIB 122 / E 150) (Yeast)).